Reading from the N-terminus, the 381-residue chain is Dof zinc finger protein 2 (381 aa).

A disordered region spans residues methionine 19–asparagine 81. Low complexity-rich tracts occupy residues alanine 23–asparagine 32 and serine 40–alanine 59. Positions threonine 68–alanine 79 are enriched in basic and acidic residues. The Dof-type zinc-finger motif lies at leucine 80–arginine 134. Zn(2+) contacts are provided by cysteine 82, cysteine 85, cysteine 107, and cysteine 110. The disordered stretch occupies residues alanine 329–glycine 349.

The protein localises to the nucleus. In terms of biological role, transcription factor that may transactivate seed storage protein genes in developing seeds. This Oryza sativa subsp. japonica (Rice) protein is Dof zinc finger protein 2.